The sequence spans 678 residues: uncharacterized protein (678 aa).

Transmembrane regions (helical) follow at residues 228 to 250 (FFVI…FSFL), 263 to 285 (LAMW…VATQ), 300 to 322 (STGA…LSCV), 334 to 356 (MLHN…AVLF), 361 to 380 (FSLS…FFSA), 387 to 405 (RIML…YAYL), 420 to 439 (NVFF…TLFF), and 455 to 477 (NLLL…SVSL). Residues 653-678 (PSSQGVHATPEKNACIRDETVPNLQE) form a disordered region.

It localises to the cell membrane. This is an uncharacterized protein from Treponema pallidum (strain Nichols).